The sequence spans 529 residues: Bifunctional purine biosynthesis protein PurH (529 aa).

Positions 1–148 constitute an MGS-like domain; that stretch reads MQQRRPVRRA…KNHKDVAIVV (148 aa).

It belongs to the PurH family.

The catalysed reaction is (6R)-10-formyltetrahydrofolate + 5-amino-1-(5-phospho-beta-D-ribosyl)imidazole-4-carboxamide = 5-formamido-1-(5-phospho-D-ribosyl)imidazole-4-carboxamide + (6S)-5,6,7,8-tetrahydrofolate. It catalyses the reaction IMP + H2O = 5-formamido-1-(5-phospho-D-ribosyl)imidazole-4-carboxamide. Its pathway is purine metabolism; IMP biosynthesis via de novo pathway; 5-formamido-1-(5-phospho-D-ribosyl)imidazole-4-carboxamide from 5-amino-1-(5-phospho-D-ribosyl)imidazole-4-carboxamide (10-formyl THF route): step 1/1. The protein operates within purine metabolism; IMP biosynthesis via de novo pathway; IMP from 5-formamido-1-(5-phospho-D-ribosyl)imidazole-4-carboxamide: step 1/1. The chain is Bifunctional purine biosynthesis protein PurH from Klebsiella pneumoniae subsp. pneumoniae (strain ATCC 700721 / MGH 78578).